The primary structure comprises 59 residues: MNFNKLFAIVLLAALVLLGQTEAGGLKKFGKKLEGVGKRVFKASEKALPVAVGIKALGK.

Residues 1–23 (MNFNKLFAIVLLAALVLLGQTEA) form the signal peptide.

The protein belongs to the cecropin family.

It is found in the secreted. In terms of biological role, cecropins have lytic and antibacterial activity against several Gram-positive and Gram-negative bacteria. This Aedes albopictus (Asian tiger mosquito) protein is Cecropin-A2 (CECA2).